Here is a 428-residue protein sequence, read N- to C-terminus: Cytochrome c biogenesis protein CcsB (428 aa).

Helical transmembrane passes span 14–34 (LRFA…GTFI), 72–92 (SFWF…CSFR), and 162–182 (IGPL…AYGS).

The protein belongs to the Ccs1/CcsB family. As to quaternary structure, may interact with CcsA.

It localises to the cellular thylakoid membrane. Its function is as follows. Required during biogenesis of c-type cytochromes (cytochrome c6 and cytochrome f) at the step of heme attachment. The protein is Cytochrome c biogenesis protein CcsB of Prochlorococcus marinus (strain AS9601).